A 633-amino-acid chain; its full sequence is Glutamyl-tRNA(Gln) amidotransferase subunit E (633 aa).

Positions 414–437 (ALPDGNTEYMRPLPGKARMYPETD) are disordered.

This sequence belongs to the GatB/GatE family. GatE subfamily. In terms of assembly, heterodimer of GatD and GatE.

It catalyses the reaction L-glutamyl-tRNA(Gln) + L-glutamine + ATP + H2O = L-glutaminyl-tRNA(Gln) + L-glutamate + ADP + phosphate + H(+). Allows the formation of correctly charged Gln-tRNA(Gln) through the transamidation of misacylated Glu-tRNA(Gln) in organisms which lack glutaminyl-tRNA synthetase. The reaction takes place in the presence of glutamine and ATP through an activated gamma-phospho-Glu-tRNA(Gln). The GatDE system is specific for glutamate and does not act on aspartate. The polypeptide is Glutamyl-tRNA(Gln) amidotransferase subunit E (Pyrococcus abyssi (strain GE5 / Orsay)).